A 145-amino-acid polypeptide reads, in one-letter code: D-aminoacyl-tRNA deacylase (145 aa).

The Gly-cisPro motif, important for rejection of L-amino acids motif lies at 137-138 (GP).

The protein belongs to the DTD family. In terms of assembly, homodimer.

It localises to the cytoplasm. It carries out the reaction glycyl-tRNA(Ala) + H2O = tRNA(Ala) + glycine + H(+). The enzyme catalyses a D-aminoacyl-tRNA + H2O = a tRNA + a D-alpha-amino acid + H(+). In terms of biological role, an aminoacyl-tRNA editing enzyme that deacylates mischarged D-aminoacyl-tRNAs. Also deacylates mischarged glycyl-tRNA(Ala), protecting cells against glycine mischarging by AlaRS. Acts via tRNA-based rather than protein-based catalysis; rejects L-amino acids rather than detecting D-amino acids in the active site. By recycling D-aminoacyl-tRNA to D-amino acids and free tRNA molecules, this enzyme counteracts the toxicity associated with the formation of D-aminoacyl-tRNA entities in vivo and helps enforce protein L-homochirality. The protein is D-aminoacyl-tRNA deacylase of Salmonella typhi.